The sequence spans 55 residues: Mannose/glucose-specific lectin alpha chain (55 aa).

Belongs to the leguminous lectin family. Tetramer of two alpha and two beta chains.

This chain is Mannose/glucose-specific lectin alpha chain, found in Lathyrus sativus (White vetchling).